A 443-amino-acid chain; its full sequence is MSFSRNQVLKGLKTKKAKPKKNPTVDELFEIAIDLEESGDRWRLEPAKCLRFYQKSLETYDRYLLQCPNDFDARFNKARLLLNMATNCDMLYKDSQVCLQKSIEMHKHALLLQEAPDIWFNLAQVHLNLAEIWVDLDREDLAYPEIQQALQSISHSIDLQERERIEWENTIQTSSQQKYEEIPDIQARRLYFIEADKEASTLVTEIASLACSCKLLEESDFEKLCQIMLPITEKLDILKLMDWYLAKTKRLVLGGKENEVAWIDLLQVFDHQLSQLPQLNLQNPLDPNSSVKPLHIQLLCDKADAYIDFAETLLDSCVSTEESASIEIMTRAWNMLGVAAKSLKMANTYNPNHVRILISRADLEIQRAAIPIMVAQNSKLVLYKNAKVLYEKAFRDYSTKKTTRTFAEIVLKHYQLQKLTNPETIKMLDSLTEVAQEDILNTI.

This sequence belongs to the UPF0656 family.

The protein resides in the cytoplasm. It is found in the nucleus. This is UPF0656 protein C926.02 from Schizosaccharomyces pombe (strain 972 / ATCC 24843) (Fission yeast).